Here is a 310-residue protein sequence, read N- to C-terminus: Serine/threonine-protein phosphatase 4 catalytic subunit (310 aa).

The Mn(2+) site is built by Asp-53, His-55, Asp-81, and Asn-113. His-114 serves as the catalytic Proton donor. Mn(2+) is bound by residues His-163 and His-237. Leucine methyl ester is present on Leu-310.

The protein belongs to the PPP phosphatase family. PP-4 (PP-X) subfamily. In terms of assembly, catalytic subunit of the histone H2A phosphatase complex (HTP-C) containing PPH3, PSY2 and PSY4. Mn(2+) is required as a cofactor.

The protein localises to the cytoplasm. Its subcellular location is the nucleus. The catalysed reaction is O-phospho-L-seryl-[protein] + H2O = L-seryl-[protein] + phosphate. It carries out the reaction O-phospho-L-threonyl-[protein] + H2O = L-threonyl-[protein] + phosphate. Functionally, involved in the dephosphorylation and activation of the transcription factor GLN3 in response to nutrient availability. Forms the histone H2A phosphatase complex in association with the regulatory subunits PSY2 and PSY4, which dephosphorylates H2AS128ph (gamma-H2A) that has been displaced from sites of DNA lesions in the double-stranded DNA break repair process. Dephosphorylation is necessary for efficient recovery from the DNA damage checkpoint. This chain is Serine/threonine-protein phosphatase 4 catalytic subunit (PPH3), found in Eremothecium gossypii (strain ATCC 10895 / CBS 109.51 / FGSC 9923 / NRRL Y-1056) (Yeast).